We begin with the raw amino-acid sequence, 430 residues long: Glutamyl-tRNA reductase 1 (430 aa).

Substrate-binding positions include 49-52, S109, 114-116, and Q120; these read TCNR and EGQ. Catalysis depends on C50, which acts as the Nucleophile. An NADP(+)-binding site is contributed by 189 to 194; sequence GAGSMA.

The protein belongs to the glutamyl-tRNA reductase family. Homodimer.

The enzyme catalyses (S)-4-amino-5-oxopentanoate + tRNA(Glu) + NADP(+) = L-glutamyl-tRNA(Glu) + NADPH + H(+). It participates in porphyrin-containing compound metabolism; protoporphyrin-IX biosynthesis; 5-aminolevulinate from L-glutamyl-tRNA(Glu): step 1/2. Its function is as follows. Catalyzes the NADPH-dependent reduction of glutamyl-tRNA(Glu) to glutamate 1-semialdehyde (GSA). This chain is Glutamyl-tRNA reductase 1, found in Nocardioides sp. (strain ATCC BAA-499 / JS614).